A 253-amino-acid polypeptide reads, in one-letter code: Ubiquinone/menaquinone biosynthesis C-methyltransferase UbiE (253 aa).

S-adenosyl-L-methionine is bound by residues threonine 76, aspartate 97, and 125 to 126 (NA).

This sequence belongs to the class I-like SAM-binding methyltransferase superfamily. MenG/UbiE family.

The catalysed reaction is a 2-demethylmenaquinol + S-adenosyl-L-methionine = a menaquinol + S-adenosyl-L-homocysteine + H(+). It carries out the reaction a 2-methoxy-6-(all-trans-polyprenyl)benzene-1,4-diol + S-adenosyl-L-methionine = a 5-methoxy-2-methyl-3-(all-trans-polyprenyl)benzene-1,4-diol + S-adenosyl-L-homocysteine + H(+). Its pathway is quinol/quinone metabolism; menaquinone biosynthesis; menaquinol from 1,4-dihydroxy-2-naphthoate: step 2/2. The protein operates within cofactor biosynthesis; ubiquinone biosynthesis. Functionally, methyltransferase required for the conversion of demethylmenaquinol (DMKH2) to menaquinol (MKH2) and the conversion of 2-polyprenyl-6-methoxy-1,4-benzoquinol (DDMQH2) to 2-polyprenyl-3-methyl-6-methoxy-1,4-benzoquinol (DMQH2). This chain is Ubiquinone/menaquinone biosynthesis C-methyltransferase UbiE, found in Stenotrophomonas maltophilia (strain R551-3).